The following is a 46-amino-acid chain: Light-harvesting protein B-800/850 beta 1 chain (46 aa).

Residues 2 to 19 (AERSLSGLTEEEAIAVHD) are Cytoplasmic-facing. 2 residues coordinate a bacteriochlorophyll: H18 and H36. Residues 20–42 (QFKTTFSAFIILAAVAHVLVWVW) traverse the membrane as a helical segment. Residues 43-46 (KPWF) are Periplasmic-facing.

The protein belongs to the antenna complex beta subunit family. In terms of assembly, the core complex is formed by different alpha and beta chains, binding bacteriochlorophyll molecules, and arranged most probably in tetrameric structures disposed around the reaction center.

The protein resides in the cell inner membrane. In terms of biological role, antenna complexes are light-harvesting systems, which transfer the excitation energy to the reaction centers. The chain is Light-harvesting protein B-800/850 beta 1 chain (B1) from Magnetospirillum molischianum (Rhodospirillum molischianum).